A 462-amino-acid polypeptide reads, in one-letter code: Ribosomal oxygenase 2 (462 aa).

The tract at residues 1–24 (MPKKARPAGDGKEQGPAPKQVKVE) is disordered. The 133-residue stretch at 139 to 271 (QPQRFKDELW…SSWGDFLLDT (133 aa)) folds into the JmjC domain. Positions 179, 181, and 240 each coordinate Fe cation. Ser308 carries the post-translational modification Phosphoserine.

The protein belongs to the ROX family. MINA53 subfamily. The cofactor is Fe(2+).

It is found in the nucleus. It localises to the nucleolus. The catalysed reaction is L-histidyl-[ribosomal protein uL15] + 2-oxoglutarate + O2 = (3S)-3-hydroxy-L-histidyl-[ribosomal protein uL15] + succinate + CO2. It catalyses the reaction L-histidyl-[protein] + 2-oxoglutarate + O2 = (3S)-3-hydroxy-L-histidyl-[protein] + succinate + CO2. Functionally, oxygenase that can act as both a histone lysine demethylase and a ribosomal histidine hydroxylase. Is involved in the demethylation of trimethylated 'Lys-9' on histone H3 (H3K9me3), leading to an increase in ribosomal RNA expression. Also catalyzes the hydroxylation of 60S ribosomal protein L27a on 'His-39'. May play an important role in cell growth and survival. May be involved in ribosome biogenesis, most likely during the assembly process of pre-ribosomal particles. The chain is Ribosomal oxygenase 2 (RIOX2) from Bos taurus (Bovine).